Here is a 232-residue protein sequence, read N- to C-terminus: E3 ubiquitin-protein ligase RNF125 (232 aa).

Over residues 1-10 the composition is skewed to polar residues; sequence MGSVLSTDSG. The interval 1–23 is disordered; sequence MGSVLSTDSGKSAPASATARALE. Gly2 carries N-myristoyl glycine lipidation. 2 residues coordinate Zn(2+): Cys37 and Cys40. The RING-type zinc finger occupies 37–76; sequence CAVCLEVLHQPVRTRCGHVFCRSCIATSLKNNKWTCPYCR. The tract at residues 43–45 is interaction with the C2HC RNF-type zinc finger; sequence VLH. The Zn(2+) site is built by Cys52, His54, Cys57, Cys60, Cys72, Cys75, Cys100, and Cys103. The C2HC RNF-type zinc-finger motif lies at 100–119; the sequence is CAECDTLVCLSEMRAHIRTC. The interaction with the RING-type zinc finger stretch occupies residues 109 to 113; the sequence is LSEMR. His115 and Cys119 together coordinate Zn(2+). The tract at residues 120–128 is linker region; that stretch reads QKYIDKYGP. A required for interaction with ubiquitin and for autoubiquitination region spans residues 210 to 224; it reads EEALIRRVLDRSLLE.

Interacts with UBE2D1. Interacts with VCP/p97; leading to recruit RNF125 to RIGI and promote ubiquitination of RIGI. Post-translationally, autoubiquitinated, leading to its subsequent proteasomal degradation. In terms of tissue distribution, predominantly expressed in lymphoid tissues, including bone marrow, spleen and thymus. Also weakly expressed in other tissues. Predominant in the CD4(+) and CD8(+) T-cells, suggesting that it is preferentially confined to T-cells.

It is found in the golgi apparatus membrane. The catalysed reaction is S-ubiquitinyl-[E2 ubiquitin-conjugating enzyme]-L-cysteine + [acceptor protein]-L-lysine = [E2 ubiquitin-conjugating enzyme]-L-cysteine + N(6)-ubiquitinyl-[acceptor protein]-L-lysine.. The protein operates within protein modification; protein ubiquitination. E3 ubiquitin-protein ligase that mediates ubiquitination and subsequent proteasomal degradation of target proteins, such as RIGI, MAVS/IPS1, IFIH1/MDA5, JAK1 and p53/TP53. Acts as a negative regulator of type I interferon production by mediating ubiquitination of RIGI at 'Lys-181', leading to RIGI degradation. Mediates ubiquitination and subsequent degradation of p53/TP53. Mediates ubiquitination and subsequent degradation of JAK1. Acts as a positive regulator of T-cell activation. The polypeptide is E3 ubiquitin-protein ligase RNF125 (Homo sapiens (Human)).